The primary structure comprises 89 residues: Small ribosomal subunit protein uS15 (89 aa).

Belongs to the universal ribosomal protein uS15 family. Part of the 30S ribosomal subunit. Forms a bridge to the 50S subunit in the 70S ribosome, contacting the 23S rRNA.

Functionally, one of the primary rRNA binding proteins, it binds directly to 16S rRNA where it helps nucleate assembly of the platform of the 30S subunit by binding and bridging several RNA helices of the 16S rRNA. Its function is as follows. Forms an intersubunit bridge (bridge B4) with the 23S rRNA of the 50S subunit in the ribosome. The sequence is that of Small ribosomal subunit protein uS15 from Aliivibrio fischeri (strain ATCC 700601 / ES114) (Vibrio fischeri).